The sequence spans 551 residues: Seventh homolog of septin 1 (551 aa).

Residue S2 is modified to N-acetylserine. In terms of domain architecture, Septin-type G spans 20–339 (RGITYTMLLC…ENYRSEKLSS (320 aa)). The tract at residues 30–37 (GPAGTGKT) is G1 motif. Residues 30-37 (GPAGTGKT), G138, 218-226 (RADSFTKEE), and R288 contribute to the GTP site. Positions 135–138 (MTHG) are G3 motif. The segment at 217 to 220 (TRAD) is G4 motif. The segment at 381–417 (NLRADTPRNQVSGNFKENEYEDNGEHDSAENEQEMSP) is disordered. A Phosphotyrosine modification is found at Y400. 2 positions are modified to phosphoserine: S408 and S416. A coiled-coil region spans residues 418-518 (VRQLGREIKQ…KLINQNKLNG (101 aa)). Glycyl lysine isopeptide (Lys-Gly) (interchain with G-Cter in SUMO) cross-links involve residues K426 and K437. Phosphoserine occurs at positions 447, 460, 519, 520, 522, and 525. The interval 515–551 (KLNGSSSSINSLQQSTRSQIKKNDTYTDLASIASGRD) is disordered. A compositionally biased stretch (low complexity) spans 519 to 532 (SSSSINSLQQSTRS). At T539 the chain carries Phosphothreonine. Phosphoserine occurs at positions 545 and 548.

The protein belongs to the TRAFAC class TrmE-Era-EngA-EngB-Septin-like GTPase superfamily. Septin GTPase family. In terms of assembly, component of the septin complex which consists of CDC3, CDC10, CDC11, CDC12 and probably SHS1 and rearranges to a cortical collar of highly ordered filaments at the mother-bud-neck. A complex formed by CDC3, CDC10, CDC11 and CDC12 is capable of forming long filaments in vitro and the components seem to be present in a 2:2:2:2 arrangement in vivo. The filaments are proposed to be formed by the end-to-end polymerization of CDC3-CDC12-CDC11 complexes with CDC10 serving as a bridge to bundle the polymers into paired filaments. Component of the GIN4 complex composed of at least BNI5, CDC3, CDC10, CDC11, CDC12, GIN4, NAP1 and SHS1. Self-associates. Interacts with CDC11 and SPA2. Post-translationally, phosphorylated by GIN4 and CLA4. Phosphorylation state is essential for septin ring dynamics during telophase. Sumoylated during mitosis on the mother cell side of the bud neck. Sumoylation probably plays a central role in regulating septin ring disassembly during the cell cycle.

Its subcellular location is the membrane. The protein localises to the bud neck. Functionally, septins are GTPases involved in cytokinesis that assemble early in the cell cycle as a patch at the incipient bud site and form a ring approximately 15 minutes before bud emergence, which transforms into an hour-glass shaped collar of cortical filaments that spans both sides of the mother-bud neck. This collar persists until just before cytokinesis, when it splits into two rings that occupy opposite sides of the neck. The septins at the bud neck serve as a structural scaffold that recruits different components involved in diverse processes at specific stages during the cell cycle. Many proteins bind asymmetrically to the septin collar. The septin assembly is regulated by protein kinases GIN4 and/or CLA4. May act by recruiting MYO1 and HOF1, a protein involved in septation, to the site of cleavage. Septins are also involved in cell morphogenesis, bud site selection, chitin deposition, cell cycle regulation, cell compartmentalization and spore wall formation. CDCd11 with SHS1 11 are involved in the recruitment of BNI5 and thereby ensure efficient localization at the bud neck of MYO1, the type II myosin of the actomyosin contractile ring. The sequence is that of Seventh homolog of septin 1 from Saccharomyces cerevisiae (strain ATCC 204508 / S288c) (Baker's yeast).